The sequence spans 265 residues: tRNA pseudouridine synthase A (265 aa).

D53 (nucleophile) is an active-site residue. Substrate is bound at residue Y111.

This sequence belongs to the tRNA pseudouridine synthase TruA family. In terms of assembly, homodimer.

The catalysed reaction is uridine(38/39/40) in tRNA = pseudouridine(38/39/40) in tRNA. Formation of pseudouridine at positions 38, 39 and 40 in the anticodon stem and loop of transfer RNAs. The protein is tRNA pseudouridine synthase A of Acinetobacter baumannii (strain AB307-0294).